A 67-amino-acid chain; its full sequence is Small, acid-soluble spore protein 2 (67 aa).

The protein belongs to the alpha/beta-type SASP family.

SASP are bound to spore DNA. They are double-stranded DNA-binding proteins that cause DNA to change to an a-like conformation. They protect the DNA backbone from chemical and enzymatic cleavage and are thus involved in dormant spore's high resistance to UV light. This chain is Small, acid-soluble spore protein 2 (Su-2), found in Sporosarcina ureae.